We begin with the raw amino-acid sequence, 238 residues long: Orotidine 5'-phosphate decarboxylase (238 aa).

Residues D10, K32, 59 to 68, T122, R184, Q193, G213, and R214 each bind substrate; that span reads DLKLHDIPNT. K61 functions as the Proton donor in the catalytic mechanism.

It belongs to the OMP decarboxylase family. Type 1 subfamily. As to quaternary structure, homodimer.

It carries out the reaction orotidine 5'-phosphate + H(+) = UMP + CO2. It participates in pyrimidine metabolism; UMP biosynthesis via de novo pathway; UMP from orotate: step 2/2. In terms of biological role, catalyzes the decarboxylation of orotidine 5'-monophosphate (OMP) to uridine 5'-monophosphate (UMP). The polypeptide is Orotidine 5'-phosphate decarboxylase (Bacillus thuringiensis subsp. konkukian (strain 97-27)).